Here is a 432-residue protein sequence, read N- to C-terminus: MSAPKVQLLLTGNELMTGDIVDSNSAMMAQVLKDIGLGVNRKVTVADDLALLVNEITYMASTSDILIINGGLGPTVDDLTAQALALAIEDELSQHPQALTHLTNWCHQRGAELNGPNLKQAILPKSCQIIANKNGSAVGFYVRFNHCDIYCTPGVPHELETMLIKQIVPAISADLPSDLITDVTRLQVFGLGESSLQKIINEQLPQWPTAIDLGFRAGMPLLEVKLTTNTKKGLALKPIWHNKLADVLGDHLISEIQDKPKSLAEHLLHQLQQHNLKVTTAESCTGGLIASKLTEISGSSMNFEAGYVTYSNKMKTAMLDVPAKLFEQYGAVSEQVVVAMAKGSLIKSTADLTIAVSGVAGPNGGTEEKPVGTVWLAWGSIDNIKTQCLLLPYKRVKFQEFVAAIGLDLLRRYQQNITSIPNYIAERAFTDQ.

Belongs to the CinA family.

The chain is CinA-like protein from Colwellia psychrerythraea (strain 34H / ATCC BAA-681) (Vibrio psychroerythus).